The primary structure comprises 146 residues: 1,4-dihydroxy-2-naphthoyl-CoA hydrolase (146 aa).

Residue Asp19 is part of the active site.

It belongs to the 4-hydroxybenzoyl-CoA thioesterase family. DHNA-CoA hydrolase subfamily.

It catalyses the reaction 1,4-dihydroxy-2-naphthoyl-CoA + H2O = 1,4-dihydroxy-2-naphthoate + CoA + H(+). It functions in the pathway cofactor biosynthesis; phylloquinone biosynthesis. The protein operates within quinol/quinone metabolism; 1,4-dihydroxy-2-naphthoate biosynthesis; 1,4-dihydroxy-2-naphthoate from chorismate: step 7/7. Functionally, catalyzes the hydrolysis of 1,4-dihydroxy-2-naphthoyl-CoA (DHNA-CoA) to 1,4-dihydroxy-2-naphthoate (DHNA), a reaction involved in phylloquinone (vitamin K1) biosynthesis. The chain is 1,4-dihydroxy-2-naphthoyl-CoA hydrolase from Thermosynechococcus vestitus (strain NIES-2133 / IAM M-273 / BP-1).